Consider the following 361-residue polypeptide: NudC domain-containing protein 3 (361 aa).

Over residues 87-97 the composition is skewed to basic and acidic residues; it reads KIRRKEEEEAK. Residues 87 to 106 are disordered; it reads KIRRKEEEEAKTVSAAAAEK. S146 is modified (phosphoserine). In terms of domain architecture, CS spans 185-277; it reads AVRENYTWSQ…VGEYWWNAIL (93 aa). Phosphoserine occurs at positions 340 and 355.

This is NudC domain-containing protein 3 (NUDCD3) from Pongo abelii (Sumatran orangutan).